Consider the following 902-residue polypeptide: Gamma-tubulin complex component 2 (902 aa).

Tyr-83 is subject to Phosphotyrosine. The segment at 875–902 (ERSQKAAPQVPVLRGPPAPAPRVAVTAQ) is disordered.

Belongs to the TUBGCP family. As to quaternary structure, component of the gamma-tubulin ring complex (gTuRC) consisting of TUBGCP2, TUBGCP3, TUBGCP4, TUBGCP5 and TUBGCP6 and gamma-tubulin TUBG1 or TUBG2. TUBGCP2, TUBGCP3, TUBGCP4, TUBGCP5 and TUBGCP6 assemble in a 5:5:2:1:1 stoichiometry; each is associated with a gamma-tubulin, thereby arranging 14 gamma-tubulins in a helical manner. Gamma-tubulin at the first position is blocked by TUBGCP3 at the last position, allowing 13 protafilaments to grow into a microtubule. The gTuRC (via TUBGCP3 and TUBGCP6) interacts with ACTB and MZT1; the interactions form a luminal bridge that stabilizes the initial structure during complex assembly. The gTuRC (via TUBGCP2) interacts with MZT2A/MZT2B and CDK5RAP2 (via CM1 motif); the interactions play a role in gTuRC activation. Interacts with ATF5; the ATF5:PCNT:polyglutamylated tubulin (PGT) tripartite unites the mother centriole and the pericentriolar material (PCM) in the centrosome.

Its subcellular location is the cytoplasm. The protein localises to the cytoskeleton. It is found in the microtubule organizing center. It localises to the centrosome. In terms of biological role, component of the gamma-tubulin ring complex (gTuRC) which mediates microtubule nucleation. The gTuRC regulates the minus-end nucleation of alpha-beta tubulin heterodimers that grow into microtubule protafilaments, a critical step in centrosome duplication and spindle formation. Plays a role in neuronal migration. The protein is Gamma-tubulin complex component 2 (TUBGCP2) of Pongo abelii (Sumatran orangutan).